The chain runs to 347 residues: Ferrochelatase (347 aa).

Fe cation contacts are provided by histidine 193 and glutamate 273.

This sequence belongs to the ferrochelatase family.

Its subcellular location is the cytoplasm. It carries out the reaction heme b + 2 H(+) = protoporphyrin IX + Fe(2+). Its pathway is porphyrin-containing compound metabolism; protoheme biosynthesis; protoheme from protoporphyrin-IX: step 1/1. Its function is as follows. Catalyzes the ferrous insertion into protoporphyrin IX. This Rickettsia canadensis (strain McKiel) protein is Ferrochelatase.